We begin with the raw amino-acid sequence, 457 residues long: Methylenetetrahydrofolate--tRNA-(uracil-5-)-methyltransferase TrmFO (457 aa).

8–13 contributes to the FAD binding site; that stretch reads GGGLAG.

This sequence belongs to the MnmG family. TrmFO subfamily. FAD is required as a cofactor.

It is found in the cytoplasm. It carries out the reaction uridine(54) in tRNA + (6R)-5,10-methylene-5,6,7,8-tetrahydrofolate + NADH + H(+) = 5-methyluridine(54) in tRNA + (6S)-5,6,7,8-tetrahydrofolate + NAD(+). It catalyses the reaction uridine(54) in tRNA + (6R)-5,10-methylene-5,6,7,8-tetrahydrofolate + NADPH + H(+) = 5-methyluridine(54) in tRNA + (6S)-5,6,7,8-tetrahydrofolate + NADP(+). In terms of biological role, catalyzes the folate-dependent formation of 5-methyl-uridine at position 54 (M-5-U54) in all tRNAs. This Thermosynechococcus vestitus (strain NIES-2133 / IAM M-273 / BP-1) protein is Methylenetetrahydrofolate--tRNA-(uracil-5-)-methyltransferase TrmFO.